Reading from the N-terminus, the 712-residue chain is MSDSDREIIGLINNFFLKAALLLEQCKVVARGGGFDGEEPLRDGNHLFNIETRGDPTLEAQIQPWTTFDGEKSMPPLVLETFLDLRGLHSNQTVYLHDSDGNPWMVCKGGKKSEIVLERWLIELDRQFSSTTGSTDAAEDDEYNEFNDPENLHKQLVLLFRYLYTLTQLLPANDIITKLQASQQGTAQATTTTGTLKPLHIHTRLLDGSKPILSKGRVGLSKPIIASYSNTMNETNIASHLEQRKITPIKTKFGSLRITVSYRKDVDFYVIDQEDPYKRTTNVSALQDTVTATDRRISSNSNISISVSPKTTNMLNANHIPVDSSGGGFARRQSISSKLQPFKVGSVGSGSFVQSGSLQSVTNPNPSLSRNVSSSSVAAALKVQRGSAGSTVLNSDLPPELSSVGSGSKYSSSFGRIRRHSSVRRSESIDRTAKPRKSNETPPEDLLEFVKLLEDKKELNMKPSTILPQQDISSSLIKFQSMKPNNDTLSDNLSMSMSIDQPNMRMGSNSHSPIPSFSPNYGSIPSRLSQGSRNNSNVELITSRKSSLDRHRLSLLNRTGSNVDIRRGSVGTMETTNEDSKEDEDSHVHGLRFNSGTVNDKTEDNNEDDDEEEILIKRSSNAVASSTEHFSVSPRSARSISVSSYTRSQLPLKHPNFSYPTTSATTAHAKFHKSEVIPDQLHREGSHHHNSSHKNDEDDDLLFVMSDMNLTN.

Disordered stretches follow at residues 388–443 and 568–611; these read AGST…ETPP and GSVG…DDDE. Over residues 402–415 the composition is skewed to low complexity; sequence SSVGSGSKYSSSFG. The interval 412 to 420 is ATG17-binding; sequence SSFGRIRRH. The span at 424–439 shows a compositional bias: basic and acidic residues; sequence RRSESIDRTAKPRKSN. An ATG1-binding region spans residues 441-500; it reads TPPEDLLEFVKLLEDKKELNMKPSTILPQQDISSSLIKFQSMKPNNDTLSDNLSMSMSID. Over residues 576-585 the composition is skewed to acidic residues; that stretch reads TNEDSKEDED.

It belongs to the ATG13 family. Fungi subfamily. In terms of assembly, hypophosphorylated form interacts with ATG1 to form the ATG1-ATG13 kinase complex. The ATG1-ATG13 complex interacts with the ATG17-ATG29-ATG31 complex through direct interaction with ATG17. Interacts with VAC8. Hyperphosphorylated under nutrient-rich conditions. Starvation and TOR inactivation results in ATG13 partial dephosphorylation leading to ATG1-binding. Dephosphorylation induces ATG17-binding.

It localises to the cytoplasm. The protein localises to the preautophagosomal structure. In terms of biological role, activates the ATG1 kinase in a nutritional condition dependent manner through the TOR pathway, leading to autophagy. Involved in ATG9 and ATG23 cycling through the pre-autophagosomal structure. Also involved in cytoplasm to vacuole transport (Cvt) and more specifically in Cvt vesicle formation. Seems to play a role in the switching machinery regulating the conversion between the Cvt pathway and autophagy. Finally, ATG13 is also required for glycogen storage during stationary phase. The polypeptide is Autophagy-related protein 13 (Kluyveromyces marxianus (strain DMKU3-1042 / BCC 29191 / NBRC 104275) (Yeast)).